We begin with the raw amino-acid sequence, 177 residues long: Cytochrome c oxidase assembly protein CtaG (177 aa).

Over 1–8 the chain is Cytoplasmic; that stretch reads MTQKAKNT. Residues 9–29 form a helical; Signal-anchor for type II membrane protein membrane-spanning segment; sequence IYLLILIILSMLCLVYASVPL. Residues 30–177 are Periplasmic-facing; the sequence is YSIFCKVTGY…TFFKYKETTK (148 aa).

This sequence belongs to the COX11/CtaG family.

It localises to the cell inner membrane. Its function is as follows. Exerts its effect at some terminal stage of cytochrome c oxidase synthesis, probably by being involved in the insertion of the copper B into subunit I. This is Cytochrome c oxidase assembly protein CtaG from Ehrlichia ruminantium (strain Gardel).